The following is a 193-amino-acid chain: Rho-related GTP-binding protein RhoA-C (193 aa).

Residues 12-19, 30-37, 59-63, 117-120, and 160-162 contribute to the GTP site; these read GDGACGKT, FPEVYVPT, DTAGQ, NKKD, and SAK. Tyr-34 carries (Microbial infection) O-linked (GlcNAc) tyrosine; by Yersinia Afp18 glycosylation. Cys-190 bears the Cysteine methyl ester mark. A lipid anchor (S-geranylgeranyl cysteine) is attached at Cys-190. A propeptide spans 191-193 (removed in mature form); sequence LLL.

This sequence belongs to the small GTPase superfamily. Rho family. In terms of processing, (Microbial infection) Glycosylated at Tyr-34 by Yersinia ruckeri toxin Afp18. Mono-O-GlcNAcylation by Afp18 inhibits RhoA activation by guanine nucleotide exchange factors and blocks RhoA signaling.

Its subcellular location is the cell membrane. In terms of biological role, regulates a signal transduction pathway linking plasma membrane receptors to the assembly of focal adhesions and actin stress fibers. The protein is Rho-related GTP-binding protein RhoA-C of Danio rerio (Zebrafish).